Here is a 29-residue protein sequence, read N- to C-terminus: ShK homolog Ask132958 (29 aa).

Positions 1-29 (CENTISGCSRADCLLTHRKQGCQKTCGLC) constitute a ShKT domain. 3 disulfide bridges follow: cysteine 1-cysteine 29, cysteine 8-cysteine 22, and cysteine 13-cysteine 26.

It belongs to the sea anemone type 1 potassium channel toxin family. Type 1a subfamily.

Its subcellular location is the secreted. The protein localises to the nematocyst. In terms of biological role, this peptide is similar to the potassium channel toxin ShK, but does not show activity on potassium channels. It appears that Lys-19, which is expected to occupy the pore of the channel, is not sufficiently accessible for binding, and therefore that this peptide must have a distinct functional role that does not involve potassium channels. It is noteworthy that this peptide is much more stable in the presence of trypsin, chymotrypsin and pepsin than the toxin ShK. The protein is ShK homolog Ask132958 of Anemonia sulcata (Mediterranean snakelocks sea anemone).